The following is a 272-amino-acid chain: MNRIDKTLEKLKANRKKMLSPYITAGDPYPELTVSLMHQLVKSGADVLELGIPFSDPMAEGPVIQRAMERALAHSIHCDDVLNMVRQFRKTDNETPVILMGYLNPIEQYGYDLFAQQAVEAGVDGTILVDLPPEEADGVSRVWQKHGLYSIYLCSPTTSAERMNFINQHANGYLYYVSLKGVTGSDALKLPELKAQYLQRKAQSKLPLMVGFGIKTPEMAAQVAEFADGVIVGATLINEIIEAYEAKKDPLQASGALLSSMRQAIDNIGSMV.

Catalysis depends on proton acceptor residues Glu49 and Glu60.

This sequence belongs to the TrpA family. As to quaternary structure, tetramer of two alpha and two beta chains.

The enzyme catalyses (1S,2R)-1-C-(indol-3-yl)glycerol 3-phosphate + L-serine = D-glyceraldehyde 3-phosphate + L-tryptophan + H2O. Its pathway is amino-acid biosynthesis; L-tryptophan biosynthesis; L-tryptophan from chorismate: step 5/5. Its function is as follows. The alpha subunit is responsible for the aldol cleavage of indoleglycerol phosphate to indole and glyceraldehyde 3-phosphate. The protein is Tryptophan synthase alpha chain of Legionella pneumophila (strain Corby).